The sequence spans 637 residues: ATP-dependent RNA helicase DBP6 (637 aa).

Residues 1–93 (MFAVRFDPSQ…AASDHPDKHN (93 aa)) are disordered. A compositionally biased stretch (acidic residues) spans 33 to 84 (DEEDESSEEETESSEDEEEKEKEEVADEDSMDVDDESSGDDDEEAEEGEVDA). Positions 198–206 (TFPIQSILL) match the Q motif motif. In terms of domain architecture, Helicase ATP-binding spans 222 to 402 (KNFTRRVGDV…GLQFYNPKLF (181 aa)). Residue 235–242 (ASTGSGKT) participates in ATP binding. The DEAD box motif lies at 342–345 (DEAD). A Helicase C-terminal domain is found at 434-608 (FLLRLLSEIN…EGQEEEAQVL (175 aa)).

Belongs to the DEAD box helicase family. DDX51/DBP6 subfamily. As to quaternary structure, associated with pre-ribosomal particles.

The protein resides in the nucleus. The protein localises to the nucleolus. It carries out the reaction ATP + H2O = ADP + phosphate + H(+). ATP-binding RNA helicase involved in the biogenesis of 60S ribosomal subunits and is required for the normal formation of 25S and 5.8S rRNAs. This Vanderwaltozyma polyspora (strain ATCC 22028 / DSM 70294 / BCRC 21397 / CBS 2163 / NBRC 10782 / NRRL Y-8283 / UCD 57-17) (Kluyveromyces polysporus) protein is ATP-dependent RNA helicase DBP6 (DBP6).